The chain runs to 397 residues: 1-carboxy-3-chloro-3,4-dihydroxycyclo hexa-1,5-diene dehydrogenase (397 aa).

To P.putida PHT4.

In Comamonas testosteroni (Pseudomonas testosteroni), this protein is 1-carboxy-3-chloro-3,4-dihydroxycyclo hexa-1,5-diene dehydrogenase (cbaC).